The chain runs to 186 residues: NADH dehydrogenase [ubiquinone] 1 beta subcomplex subunit 8, mitochondrial (186 aa).

A mitochondrion-targeting transit peptide spans 1–28 (MAAARAGVLGVRWLQKAARNVVPLGART). A helical transmembrane segment spans residues 133–153 (LFGFVAFMLFMFWVGETYPAY).

Belongs to the complex I NDUFB8 subunit family. As to quaternary structure, complex I is composed of 45 different subunits.

The protein resides in the mitochondrion inner membrane. Functionally, accessory subunit of the mitochondrial membrane respiratory chain NADH dehydrogenase (Complex I), that is believed not to be involved in catalysis. Complex I functions in the transfer of electrons from NADH to the respiratory chain. The immediate electron acceptor for the enzyme is believed to be ubiquinone. In Bos taurus (Bovine), this protein is NADH dehydrogenase [ubiquinone] 1 beta subcomplex subunit 8, mitochondrial (NDUFB8).